The sequence spans 805 residues: Phenylalanine--tRNA ligase beta subunit (805 aa).

The tRNA-binding domain maps to 39–154; sequence SEGLKKVVVG…DDATPGDPVF (116 aa). The B5 domain maps to 410-485; that stretch reads VQPTTVTIDL…RLYGYDNLPA (76 aa). The Mg(2+) site is built by aspartate 463, aspartate 469, glutamate 472, and glutamate 473. An FDX-ACB domain is found at 712-805; it reads SKFPSITRDV…LTDELGAEIR (94 aa).

It belongs to the phenylalanyl-tRNA synthetase beta subunit family. Type 1 subfamily. As to quaternary structure, tetramer of two alpha and two beta subunits. The cofactor is Mg(2+).

It is found in the cytoplasm. The enzyme catalyses tRNA(Phe) + L-phenylalanine + ATP = L-phenylalanyl-tRNA(Phe) + AMP + diphosphate + H(+). The polypeptide is Phenylalanine--tRNA ligase beta subunit (Lactiplantibacillus plantarum (strain ATCC BAA-793 / NCIMB 8826 / WCFS1) (Lactobacillus plantarum)).